The primary structure comprises 128 residues: 3-aminoacrylate deaminase RutC (128 aa).

The protein belongs to the RutC family. In terms of assembly, homotrimer.

The catalysed reaction is (Z)-3-aminoacrylate + H2O + H(+) = 3-oxopropanoate + NH4(+). Its function is as follows. Involved in pyrimidine catabolism. Catalyzes the deamination of 3-aminoacrylate to malonic semialdehyde, a reaction that can also occur spontaneously. RutC may facilitate the reaction and modulate the metabolic fitness, rather than catalyzing essential functions. This Escherichia coli (strain SE11) protein is 3-aminoacrylate deaminase RutC.